The chain runs to 570 residues: Formate--tetrahydrofolate ligase (570 aa).

65–72 (TPHGEGKT) contributes to the ATP binding site.

It belongs to the formate--tetrahydrofolate ligase family.

The catalysed reaction is (6S)-5,6,7,8-tetrahydrofolate + formate + ATP = (6R)-10-formyltetrahydrofolate + ADP + phosphate. Its pathway is one-carbon metabolism; tetrahydrofolate interconversion. This is Formate--tetrahydrofolate ligase from Shewanella sp. (strain ANA-3).